The primary structure comprises 196 residues: Ribonuclease H (196 aa).

The RNase H type-1 domain occupies 58–196; it reads LAKEEIIWES…GEIKADYGRK (139 aa). Mg(2+) is bound by residues D71, E109, D132, and D192.

This sequence belongs to the RNase H family. Mn(2+) serves as cofactor. The cofactor is Mg(2+).

It localises to the cytoplasm. The catalysed reaction is Endonucleolytic cleavage to 5'-phosphomonoester.. Functionally, endonuclease that specifically degrades the RNA of RNA-DNA hybrids. The chain is Ribonuclease H (rnhA) from Halalkalibacterium halodurans (strain ATCC BAA-125 / DSM 18197 / FERM 7344 / JCM 9153 / C-125) (Bacillus halodurans).